We begin with the raw amino-acid sequence, 118 residues long: Large ribosomal subunit protein bL20 (118 aa).

This sequence belongs to the bacterial ribosomal protein bL20 family.

Binds directly to 23S ribosomal RNA and is necessary for the in vitro assembly process of the 50S ribosomal subunit. It is not involved in the protein synthesizing functions of that subunit. In Photorhabdus laumondii subsp. laumondii (strain DSM 15139 / CIP 105565 / TT01) (Photorhabdus luminescens subsp. laumondii), this protein is Large ribosomal subunit protein bL20.